The sequence spans 1399 residues: DNA-directed RNA polymerase subunit beta' (1399 aa).

Zn(2+)-binding residues include cysteine 70, cysteine 72, cysteine 85, and cysteine 88. Mg(2+)-binding residues include aspartate 460, aspartate 462, and aspartate 464. The Zn(2+) site is built by cysteine 814, cysteine 888, cysteine 895, and cysteine 898.

Belongs to the RNA polymerase beta' chain family. As to quaternary structure, the RNAP catalytic core consists of 2 alpha, 1 beta, 1 beta' and 1 omega subunit. When a sigma factor is associated with the core the holoenzyme is formed, which can initiate transcription. Mg(2+) is required as a cofactor. Requires Zn(2+) as cofactor.

The catalysed reaction is RNA(n) + a ribonucleoside 5'-triphosphate = RNA(n+1) + diphosphate. Its function is as follows. DNA-dependent RNA polymerase catalyzes the transcription of DNA into RNA using the four ribonucleoside triphosphates as substrates. The sequence is that of DNA-directed RNA polymerase subunit beta' from Pseudomonas putida (strain W619).